The primary structure comprises 581 residues: Arginine--tRNA ligase (581 aa).

Residues 131 to 141 carry the 'HIGH' region motif; it reads ANPTGPMHVGH.

The protein belongs to the class-I aminoacyl-tRNA synthetase family. In terms of assembly, monomer.

It is found in the cytoplasm. The catalysed reaction is tRNA(Arg) + L-arginine + ATP = L-arginyl-tRNA(Arg) + AMP + diphosphate. This Paracoccus denitrificans (strain Pd 1222) protein is Arginine--tRNA ligase.